Here is a 560-residue protein sequence, read N- to C-terminus: Proline--tRNA ligase (560 aa).

Belongs to the class-II aminoacyl-tRNA synthetase family. ProS type 1 subfamily. Homodimer.

The protein localises to the cytoplasm. The catalysed reaction is tRNA(Pro) + L-proline + ATP = L-prolyl-tRNA(Pro) + AMP + diphosphate. In terms of biological role, catalyzes the attachment of proline to tRNA(Pro) in a two-step reaction: proline is first activated by ATP to form Pro-AMP and then transferred to the acceptor end of tRNA(Pro). As ProRS can inadvertently accommodate and process non-cognate amino acids such as alanine and cysteine, to avoid such errors it has two additional distinct editing activities against alanine. One activity is designated as 'pretransfer' editing and involves the tRNA(Pro)-independent hydrolysis of activated Ala-AMP. The other activity is designated 'posttransfer' editing and involves deacylation of mischarged Ala-tRNA(Pro). The misacylated Cys-tRNA(Pro) is not edited by ProRS. The sequence is that of Proline--tRNA ligase from Vesicomyosocius okutanii subsp. Calyptogena okutanii (strain HA).